The primary structure comprises 306 residues: HTH-type transcriptional regulator AlkR (306 aa).

In terms of domain architecture, HTH araC/xylS-type spans S207–Q305. DNA-binding regions (H-T-H motif) lie at residues E224–V245 and I272–F295.

The protein operates within hydrocarbon metabolism; alkane degradation. In terms of biological role, this protein activates the expression of the alkane 1-monooxygenase AlkM. This chain is HTH-type transcriptional regulator AlkR (alkR), found in Acinetobacter baylyi (strain ATCC 33305 / BD413 / ADP1).